The chain runs to 64 residues: Beta-defensin 5 (64 aa).

The N-terminal stretch at 1–23 is a signal peptide; that stretch reads MKIHYLLFAFLLVLLSPLAGVFS. 3 disulfide bridges follow: Cys-32/Cys-60, Cys-39/Cys-53, and Cys-43/Cys-61.

This sequence belongs to the beta-defensin family.

It is found in the secreted. Its function is as follows. Has antibacterial activity. In Mus musculus (Mouse), this protein is Beta-defensin 5 (Defb5).